The primary structure comprises 54 residues: Ovomucoid (54 aa).

One can recognise a Kazal-like domain in the interval 4-54; sequence VDCSDYPKPACRMEYMPLCGSDNKTYGNKCNFCNAVVDSNGTLTLSHFGKC. Intrachain disulfides connect cysteine 6–cysteine 36, cysteine 14–cysteine 33, and cysteine 22–cysteine 54. An N-linked (GlcNAc...) asparagine glycan is attached at asparagine 43.

The protein localises to the secreted. This is Ovomucoid from Cereopsis novaehollandiae (Cape Barren goose).